The sequence spans 225 residues: MDYRQLHRWDLPPEEAIKVQNELRKKIKLTPYEGEPEYVAGVDLSFPGKEEGLAVIVVLEYPSFKILEVVSERGEITFPYIPGLLAFREGPLFLKAWEKLRTKPDVVVFDGQGLAHPRKLGIASHMGLFIEIPTIGVAKSRLYGTFKMPEDKRCSWSYLYDGEEIIGCVIRTKEGSAPIFVSPGHLMDIESSKRLIKAFTLPGRRIPEPTRLAHIYTQRLKKGLF.

Mg(2+) contacts are provided by D43 and D110.

Belongs to the endonuclease V family. Mg(2+) is required as a cofactor.

Its subcellular location is the cytoplasm. The enzyme catalyses Endonucleolytic cleavage at apurinic or apyrimidinic sites to products with a 5'-phosphate.. Functionally, DNA repair enzyme involved in the repair of deaminated bases. Selectively cleaves double-stranded DNA at the second phosphodiester bond 3' to a deoxyinosine leaving behind the intact lesion on the nicked DNA. This Thermotoga petrophila (strain ATCC BAA-488 / DSM 13995 / JCM 10881 / RKU-1) protein is Endonuclease V.